Reading from the N-terminus, the 87-residue chain is Beta-toxin CsE3 (87 aa).

A signal peptide spans 1 to 19 (MNSLLIIAACLALIGTVWA). An LCN-type CS-alpha/beta domain is found at 20–85 (KEGYIVNYHT…VWPLPKKKCN (66 aa)). 4 disulfides stabilise this stretch: C31–C84, C35–C60, C44–C65, and C48–C67. N85 carries the post-translational modification Asparagine amide.

It belongs to the long (4 C-C) scorpion toxin superfamily. Sodium channel inhibitor family. Beta subfamily. Expressed by the venom gland.

The protein resides in the secreted. Beta toxins bind voltage-independently at site-4 of sodium channels (Nav) and shift the voltage of activation toward more negative potentials thereby affecting sodium channel activation and promoting spontaneous and repetitive firing. In Centruroides sculpturatus (Arizona bark scorpion), this protein is Beta-toxin CsE3.